Reading from the N-terminus, the 363-residue chain is 3-dehydroquinate synthase (363 aa).

NAD(+) contacts are provided by residues 134-135 (TT), Lys-147, Lys-156, and 174-177 (TLKT). The Zn(2+) site is built by Glu-189, His-254, and His-271.

This sequence belongs to the sugar phosphate cyclases superfamily. Dehydroquinate synthase family. Co(2+) serves as cofactor. It depends on Zn(2+) as a cofactor. Requires NAD(+) as cofactor.

The protein localises to the cytoplasm. It catalyses the reaction 7-phospho-2-dehydro-3-deoxy-D-arabino-heptonate = 3-dehydroquinate + phosphate. Its pathway is metabolic intermediate biosynthesis; chorismate biosynthesis; chorismate from D-erythrose 4-phosphate and phosphoenolpyruvate: step 2/7. Catalyzes the conversion of 3-deoxy-D-arabino-heptulosonate 7-phosphate (DAHP) to dehydroquinate (DHQ). This Prochlorococcus marinus (strain MIT 9515) protein is 3-dehydroquinate synthase.